Consider the following 178-residue polypeptide: Large ribosomal subunit protein uL6 (178 aa).

It belongs to the universal ribosomal protein uL6 family. Part of the 50S ribosomal subunit.

In terms of biological role, this protein binds to the 23S rRNA, and is important in its secondary structure. It is located near the subunit interface in the base of the L7/L12 stalk, and near the tRNA binding site of the peptidyltransferase center. The polypeptide is Large ribosomal subunit protein uL6 (Nitrosococcus oceani (strain ATCC 19707 / BCRC 17464 / JCM 30415 / NCIMB 11848 / C-107)).